A 456-amino-acid chain; its full sequence is Imidazolonepropionase (456 aa).

Residues H104 and H106 each contribute to the Fe(3+) site. The Zn(2+) site is built by H104 and H106. Residues R113, Y176, and H209 each contribute to the 4-imidazolone-5-propanoate site. Residue Y176 coordinates N-formimidoyl-L-glutamate. H274 contributes to the Fe(3+) binding site. H274 contributes to the Zn(2+) binding site. Q277 contributes to the 4-imidazolone-5-propanoate binding site. Residue D349 participates in Fe(3+) binding. D349 is a Zn(2+) binding site. Positions 351 and 353 each coordinate N-formimidoyl-L-glutamate. Residue S354 participates in 4-imidazolone-5-propanoate binding.

It belongs to the metallo-dependent hydrolases superfamily. HutI family. Zn(2+) serves as cofactor. Fe(3+) is required as a cofactor.

Its subcellular location is the cytoplasm. The enzyme catalyses 4-imidazolone-5-propanoate + H2O = N-formimidoyl-L-glutamate. It functions in the pathway amino-acid degradation; L-histidine degradation into L-glutamate; N-formimidoyl-L-glutamate from L-histidine: step 3/3. Its function is as follows. Catalyzes the hydrolytic cleavage of the carbon-nitrogen bond in imidazolone-5-propanoate to yield N-formimidoyl-L-glutamate. It is the third step in the universal histidine degradation pathway. In Verminephrobacter eiseniae (strain EF01-2), this protein is Imidazolonepropionase.